The primary structure comprises 355 residues: MIGEKKKRIGLIFGGYSNEHEVSISSAKTVFQAFNSEINKKRFKVKSFYIDKYGDWLDNDLSEKILNDEIKSNNIKKQEIVNQQKINFLDGIEFQNIDVWFPLLHGLNGEDGSIHGLLQYTRKPIVGCGILGSAIGMDKIMMKTIFSNLKIPQVNYLAFQNEDLDDREVKKKVINEILKKLNFPFFVKPSNSGSSLGISKVINESEILQSLEKAQKIDSRILVEEGLEVREIECGIIGNSELLTSEIGEIKYESDWYDYDSKYYSNNKIIIPAEIDSKITKEIKKIAIQSCRALNIFGFARVDFFLEKSSNKILLNEINTIPGFTTNSMFPMLWKASGLNIEQLVAKLVDISLDL.

The ATP-grasp domain occupies 143 to 350; it reads KTIFSNLKIP…IEQLVAKLVD (208 aa). ATP is bound at residue 178-233; that stretch reads LKKLNFPFFVKPSNSGSSLGISKVINESEILQSLEKAQKIDSRILVEEGLEVREIE. 3 residues coordinate Mg(2+): D303, E317, and N319.

This sequence belongs to the D-alanine--D-alanine ligase family. Requires Mg(2+) as cofactor. Mn(2+) serves as cofactor.

The protein resides in the cytoplasm. The enzyme catalyses 2 D-alanine + ATP = D-alanyl-D-alanine + ADP + phosphate + H(+). It participates in cell wall biogenesis; peptidoglycan biosynthesis. In terms of biological role, cell wall formation. In Prochlorococcus marinus (strain MIT 9215), this protein is D-alanine--D-alanine ligase.